The chain runs to 93 residues: Small ribosomal subunit protein uS19 (93 aa).

It belongs to the universal ribosomal protein uS19 family.

In terms of biological role, protein S19 forms a complex with S13 that binds strongly to the 16S ribosomal RNA. This chain is Small ribosomal subunit protein uS19, found in Geotalea uraniireducens (strain Rf4) (Geobacter uraniireducens).